Consider the following 286-residue polypeptide: tRNA (guanine-N(7)-)-methyltransferase (286 aa).

Positions 1–22 (MGRARPKSQKRGDYRVSRSQEN) are disordered. S-adenosyl-L-methionine contacts are provided by residues Gly-104, 127-128 (EI), 162-163 (NS), and Cys-182. The active site involves Asp-185. 260–262 (TEE) is an S-adenosyl-L-methionine binding site.

This sequence belongs to the class I-like SAM-binding methyltransferase superfamily. TrmB family. In terms of assembly, forms a complex with TRM82.

It localises to the nucleus. The catalysed reaction is guanosine(46) in tRNA + S-adenosyl-L-methionine = N(7)-methylguanosine(46) in tRNA + S-adenosyl-L-homocysteine. It functions in the pathway tRNA modification; N(7)-methylguanine-tRNA biosynthesis. In terms of biological role, catalyzes the formation of N(7)-methylguanine at position 46 (m7G46) in tRNA. In Colletotrichum orbiculare (strain 104-T / ATCC 96160 / CBS 514.97 / LARS 414 / MAFF 240422) (Cucumber anthracnose fungus), this protein is tRNA (guanine-N(7)-)-methyltransferase.